Consider the following 371-residue polypeptide: Cathepsin W (371 aa).

An N-terminal signal peptide occupies residues 1-21; that stretch reads MTLTAHLSYFLVLLLAGQGLS. A propeptide spanning residues 22–125 is cleaved from the precursor; the sequence is DSLLTKDAGP…KVESNTWGES (104 aa). N-linked (GlcNAc...) asparagine glycosylation is found at N48 and N112. Disulfide bonds link C148/C189, C182/C224, and C282/C347. C151 is an active-site residue. N-linked (GlcNAc...) asparagine glycosylation occurs at N203. Residues H289 and N326 contribute to the active site. N-linked (GlcNAc...) asparagine glycosylation occurs at N344.

This sequence belongs to the peptidase C1 family.

The protein resides in the endoplasmic reticulum. May have a specific function in the mechanism or regulation of T-cell cytolytic activity. The sequence is that of Cathepsin W (Ctsw) from Mus musculus (Mouse).